The primary structure comprises 638 residues: Threonine--tRNA ligase (638 aa).

One can recognise a TGS domain in the interval 1-61 (MPEITLPDGS…DNDSKVVIIT (61 aa)). Residues 242–533 (DHRKLGKKHS…LIEQYEAKFP (292 aa)) form a catalytic region. Cys-333, His-384, and His-510 together coordinate Zn(2+).

This sequence belongs to the class-II aminoacyl-tRNA synthetase family. As to quaternary structure, homodimer. Requires Zn(2+) as cofactor.

Its subcellular location is the cytoplasm. It carries out the reaction tRNA(Thr) + L-threonine + ATP = L-threonyl-tRNA(Thr) + AMP + diphosphate + H(+). Functionally, catalyzes the attachment of threonine to tRNA(Thr) in a two-step reaction: L-threonine is first activated by ATP to form Thr-AMP and then transferred to the acceptor end of tRNA(Thr). Also edits incorrectly charged L-seryl-tRNA(Thr). The chain is Threonine--tRNA ligase from Prochlorococcus marinus subsp. pastoris (strain CCMP1986 / NIES-2087 / MED4).